The primary structure comprises 388 residues: tRNA (guanine-N(7)-)-methyltransferase (388 aa).

Residues glutamate 129, glutamate 154, and aspartate 181 each coordinate S-adenosyl-L-methionine. Lysine 207 and aspartate 237 together coordinate substrate.

It belongs to the class I-like SAM-binding methyltransferase superfamily. TrmB family.

The catalysed reaction is guanosine(46) in tRNA + S-adenosyl-L-methionine = N(7)-methylguanosine(46) in tRNA + S-adenosyl-L-homocysteine. Its pathway is tRNA modification; N(7)-methylguanine-tRNA biosynthesis. Catalyzes the formation of N(7)-methylguanine at position 46 (m7G46) in tRNA. The polypeptide is tRNA (guanine-N(7)-)-methyltransferase (Wolinella succinogenes (strain ATCC 29543 / DSM 1740 / CCUG 13145 / JCM 31913 / LMG 7466 / NCTC 11488 / FDC 602W) (Vibrio succinogenes)).